The following is a 564-amino-acid chain: MPKVEVYRSILLGKIGKDLTDCELVSILEMAKAEICEFYTGNDKIKIEFNDTNRPDLWSYTGLARQIKTYLFGQLPSFEFFSTADNLQKFYGEILVSPEAFSIRPFIFGFLAKGMICNEQMLETLIQLQEKLCHNYGQKRKRVAMGMYSSASIEFPVSYVTCNSDYRFIPLGMDIEMSIKEINKRHPKGIEYASILEHFTEYPLLLDYNDKVLSYPPVINSHDIGALKVGDTDLFIEVTGTNLEATLLSLSVVACDLHDMGFEILPVKTVFPKETPFGKEIICPYYFQNTLEVSVESVNRMFGSNFTVNDMCLDLKKLGISAYFKELDKFYIIPPVYRNDFLHEVDVIEEIMIGRGLDSFKPELPKDFTLGKLSQIEEFSRKIKNLMIGMGFQEMIYNYLGSRTDFIEKMNIKSDEFLSVANPMTEGYEYVRGSIVPDLLKSESISSNFPYPHKIFEIGKVALKDLSSVDGTMTYDNLAFLMADKEFSFNEINSLVSSLFYYLNIEFKLRESSQTLYINGRGADILINDIILGSFGEVSPYILSNFGIMVPCCVLEINLNKILH.

The B5 domain maps to 286–362; it reads YFQNTLEVSV…IGRGLDSFKP (77 aa). Residues D340, D346, E349, and E350 each coordinate Mg(2+).

This sequence belongs to the phenylalanyl-tRNA synthetase beta subunit family. Type 2 subfamily. As to quaternary structure, tetramer of two alpha and two beta subunits. Mg(2+) serves as cofactor.

Its subcellular location is the cytoplasm. The catalysed reaction is tRNA(Phe) + L-phenylalanine + ATP = L-phenylalanyl-tRNA(Phe) + AMP + diphosphate + H(+). The sequence is that of Phenylalanine--tRNA ligase beta subunit from Borrelia hermsii (strain HS1 / DAH).